Here is a 97-residue protein sequence, read N- to C-terminus: Co-chaperonin GroES (97 aa).

It belongs to the GroES chaperonin family. Heptamer of 7 subunits arranged in a ring. Interacts with the chaperonin GroEL.

Its subcellular location is the cytoplasm. In terms of biological role, together with the chaperonin GroEL, plays an essential role in assisting protein folding. The GroEL-GroES system forms a nano-cage that allows encapsulation of the non-native substrate proteins and provides a physical environment optimized to promote and accelerate protein folding. GroES binds to the apical surface of the GroEL ring, thereby capping the opening of the GroEL channel. The chain is Co-chaperonin GroES from Nocardioides sp. (strain ATCC BAA-499 / JS614).